The chain runs to 253 residues: Imidazole glycerol phosphate synthase subunit HisF (253 aa).

Active-site residues include D11 and D130.

Belongs to the HisA/HisF family. In terms of assembly, heterodimer of HisH and HisF.

Its subcellular location is the cytoplasm. It catalyses the reaction 5-[(5-phospho-1-deoxy-D-ribulos-1-ylimino)methylamino]-1-(5-phospho-beta-D-ribosyl)imidazole-4-carboxamide + L-glutamine = D-erythro-1-(imidazol-4-yl)glycerol 3-phosphate + 5-amino-1-(5-phospho-beta-D-ribosyl)imidazole-4-carboxamide + L-glutamate + H(+). The protein operates within amino-acid biosynthesis; L-histidine biosynthesis; L-histidine from 5-phospho-alpha-D-ribose 1-diphosphate: step 5/9. Its function is as follows. IGPS catalyzes the conversion of PRFAR and glutamine to IGP, AICAR and glutamate. The HisF subunit catalyzes the cyclization activity that produces IGP and AICAR from PRFAR using the ammonia provided by the HisH subunit. The sequence is that of Imidazole glycerol phosphate synthase subunit HisF from Ruegeria sp. (strain TM1040) (Silicibacter sp.).